A 45-amino-acid chain; its full sequence is Photosystem II reaction center protein K (45 aa).

A propeptide spanning residues 1 to 8 (MDFALLLA) is cleaved from the precursor. A helical transmembrane segment spans residues 24 to 44 (LPLIPLFFLLLAFVWQAAVGF).

It belongs to the PsbK family. In terms of assembly, PSII is composed of 1 copy each of membrane proteins PsbA, PsbB, PsbC, PsbD, PsbE, PsbF, PsbH, PsbI, PsbJ, PsbK, PsbL, PsbM, PsbT, PsbX, PsbY, PsbZ, Psb30/Ycf12, peripheral proteins PsbO, CyanoQ (PsbQ), PsbU, PsbV and a large number of cofactors. It forms dimeric complexes.

It localises to the cellular thylakoid membrane. One of the components of the core complex of photosystem II (PSII). PSII is a light-driven water:plastoquinone oxidoreductase that uses light energy to abstract electrons from H(2)O, generating O(2) and a proton gradient subsequently used for ATP formation. It consists of a core antenna complex that captures photons, and an electron transfer chain that converts photonic excitation into a charge separation. The chain is Photosystem II reaction center protein K from Gloeothece citriformis (strain PCC 7424) (Cyanothece sp. (strain PCC 7424)).